A 140-amino-acid polypeptide reads, in one-letter code: 3-hydroxyacyl-[acyl-carrier-protein] dehydratase FabZ (140 aa).

H48 is a catalytic residue.

Belongs to the thioester dehydratase family. FabZ subfamily.

The protein resides in the cytoplasm. It carries out the reaction a (3R)-hydroxyacyl-[ACP] = a (2E)-enoyl-[ACP] + H2O. Involved in unsaturated fatty acids biosynthesis. Catalyzes the dehydration of short chain beta-hydroxyacyl-ACPs and long chain saturated and unsaturated beta-hydroxyacyl-ACPs. The protein is 3-hydroxyacyl-[acyl-carrier-protein] dehydratase FabZ of Oceanobacillus iheyensis (strain DSM 14371 / CIP 107618 / JCM 11309 / KCTC 3954 / HTE831).